Reading from the N-terminus, the 123-residue chain is Nitrogenase-stabilizing/protective protein NifW (123 aa).

This sequence belongs to the NifW family. As to quaternary structure, homotrimer; associates with NifD.

May protect the nitrogenase Fe-Mo protein from oxidative damage. The sequence is that of Nitrogenase-stabilizing/protective protein NifW from Rhodopseudomonas palustris (strain HaA2).